A 101-amino-acid chain; its full sequence is Ubiquitin-related modifier 1 (101 aa).

Position 101 is a 1-thioglycine (G101). A Glycyl lysine isopeptide (Gly-Lys) (interchain with K-? in acceptor proteins) cross-link involves residue G101.

The protein belongs to the URM1 family. As to quaternary structure, component of a complex at least composed of URM1, CTU2/NCS2 and CTU1/ATPBD3. Post-translationally, C-terminal thiocarboxylation occurs in 2 steps, it is first acyl-adenylated (-COAMP) via the hesA/moeB/thiF part of MOCS3, then thiocarboxylated (-COSH) via the rhodanese domain of MOCS3.

It localises to the cytoplasm. Its pathway is tRNA modification; 5-methoxycarbonylmethyl-2-thiouridine-tRNA biosynthesis. In terms of biological role, acts as a sulfur carrier required for 2-thiolation of mcm(5)S(2)U at tRNA wobble positions of cytosolic tRNA(Lys), tRNA(Glu) and tRNA(Gln). Serves as sulfur donor in tRNA 2-thiolation reaction by being thiocarboxylated (-COSH) at its C-terminus by MOCS3. The sulfur is then transferred to tRNA to form 2-thiolation of mcm(5)S(2)U. Also acts as a ubiquitin-like protein (UBL) that is covalently conjugated via an isopeptide bond to lysine residues of target proteins such as MOCS3, ATPBD3, CTU2, USP15 and CAS. The thiocarboxylated form serves as substrate for conjugation and oxidative stress specifically induces the formation of UBL-protein conjugates. The chain is Ubiquitin-related modifier 1 from Homo sapiens (Human).